The primary structure comprises 63 residues: Bowman-birk type proteinase inhibitor (63 aa).

Disulfide bonds link Cys7/Cys61, Cys8/Cys23, Cys11/Cys57, Cys13/Cys21, Cys31/Cys38, Cys35/Cys50, and Cys40/Cys48.

Functionally, inhibits trypsin, chymotrypsin, plasmin and factor XIIa. Does not inhibit factor Xa, thrombin and plasma kallikrein. This Amburana acreana (Cerejeira) protein is Bowman-birk type proteinase inhibitor.